The primary structure comprises 872 residues: MKQMSSAQIRQMWLDFWASKGHSVEPSVSLVPVNDPTLLWINSGVATLKKYFDGTIIPENPRITNAQKAIRTNDIENVGKTARHHTMFEMLGNFSIGDYFRDEAITWAYELLTSPEWFDFPAEKLYMTYYPDDKDSYNRWIEVGVDPSHLIPIEDNFWEIGAGPSGPDTEIFFDRGEAFDPENIGLRLLAEDIENDRYIEIWNIVLSQFNADPAVPRSEYKELPHKNIDTGAGLERLVAVIQGAKTNFETDLFMPIIREVEKLSGKVYDQDGDNMSFKVIADHIRSLSFAIGDGALPGNEGRGYVLRRLLRGASMHGQKLGINEPFLYKLVPTVGKIMESYYPEVLEKRDFIEKIVKSEEESFARTLHSGQHFAETIVADLKAKGQNVIAGQDVFKLYDTYGFPVELTEEIAEEAGMTVDREGFEVAMKEQQERARASAVKGGSMGMQNETLQNITVESVFNYNASQLPSKLVAIVAENAEVEAVSEGTASLIFAETPFYAEMGGQVADHGQILDATGNLVATVTDVQKAPNGQALHTVEVLAPLALNQEYTLAIDTNRRHRVMKNHTATHLLHAALHNILGHHATQAGSLNEVEFLRFDFTHFQAVTPEELRAIEQQVNEKIWEAIAVETVETDIDTAKEMGAMALFGEKYGKEVRVVTIGDYSVELCGGTHVGNTSEIGLFKIVKEEGIGSGTRRILAVTGKEAFEAYREQEDALKAVAATLKAPQLKEVPHKVEGLQEQLRQLQKENAELKEKAAAAAAGDVFKDVKEVNGHRYIVSQVSVSDAGALRTFADNWKQKDYSDVLVLVAAIGDKVNALVASKTKDIHAGNLVKELAPIVDGRGGGKPDMAMAGGSNQAKIQELLEAVAGKL.

Zn(2+) contacts are provided by His567, His571, Cys669, and His673.

Belongs to the class-II aminoacyl-tRNA synthetase family. Requires Zn(2+) as cofactor.

The protein localises to the cytoplasm. The enzyme catalyses tRNA(Ala) + L-alanine + ATP = L-alanyl-tRNA(Ala) + AMP + diphosphate. Functionally, catalyzes the attachment of alanine to tRNA(Ala) in a two-step reaction: alanine is first activated by ATP to form Ala-AMP and then transferred to the acceptor end of tRNA(Ala). Also edits incorrectly charged Ser-tRNA(Ala) and Gly-tRNA(Ala) via its editing domain. This chain is Alanine--tRNA ligase, found in Streptococcus gordonii (strain Challis / ATCC 35105 / BCRC 15272 / CH1 / DL1 / V288).